The chain runs to 484 residues: tRNA sulfurtransferase (484 aa).

A THUMP domain is found at Pro-61–Arg-165. Residues Leu-183–Ile-184, Lys-265, Gly-287, and Gln-296 contribute to the ATP site. Cys-344 and Cys-456 form a disulfide bridge. The 80-residue stretch at Leu-404–Pro-483 folds into the Rhodanese domain. Catalysis depends on Cys-456, which acts as the Cysteine persulfide intermediate.

The protein belongs to the ThiI family.

It is found in the cytoplasm. It carries out the reaction [ThiI sulfur-carrier protein]-S-sulfanyl-L-cysteine + a uridine in tRNA + 2 reduced [2Fe-2S]-[ferredoxin] + ATP + H(+) = [ThiI sulfur-carrier protein]-L-cysteine + a 4-thiouridine in tRNA + 2 oxidized [2Fe-2S]-[ferredoxin] + AMP + diphosphate. The catalysed reaction is [ThiS sulfur-carrier protein]-C-terminal Gly-Gly-AMP + S-sulfanyl-L-cysteinyl-[cysteine desulfurase] + AH2 = [ThiS sulfur-carrier protein]-C-terminal-Gly-aminoethanethioate + L-cysteinyl-[cysteine desulfurase] + A + AMP + 2 H(+). The protein operates within cofactor biosynthesis; thiamine diphosphate biosynthesis. In terms of biological role, catalyzes the ATP-dependent transfer of a sulfur to tRNA to produce 4-thiouridine in position 8 of tRNAs, which functions as a near-UV photosensor. Also catalyzes the transfer of sulfur to the sulfur carrier protein ThiS, forming ThiS-thiocarboxylate. This is a step in the synthesis of thiazole, in the thiamine biosynthesis pathway. The sulfur is donated as persulfide by IscS. The protein is tRNA sulfurtransferase of Haemophilus ducreyi (strain 35000HP / ATCC 700724).